The following is a 310-amino-acid chain: Ferredoxin--NADP reductase (310 aa).

FAD-binding residues include D26, Q34, Y39, V78, F108, D268, and T308.

Belongs to the ferredoxin--NADP reductase type 2 family. Homodimer. Requires FAD as cofactor.

The enzyme catalyses 2 reduced [2Fe-2S]-[ferredoxin] + NADP(+) + H(+) = 2 oxidized [2Fe-2S]-[ferredoxin] + NADPH. This is Ferredoxin--NADP reductase from Lactobacillus helveticus (strain DPC 4571).